A 142-amino-acid chain; its full sequence is MIFKYIVAVSFLIASGYARSVKNDEQSLSQREVLEEESLREIRGIGGALLSVGKSALKGLAKGFAEHFGKRTAEDHEVMKRLEAVIRDLDSLDHSEEASERETRGFNQEEIANLFTKKEKRILGPVLGLVSNAIGGLIKKIG.

A signal peptide spans 1-18 (MIFKYIVAVSFLIASGYA). Positions 19 to 43 (RSVKNDEQSLSQREVLEEESLREIR) are excised as a propeptide. Phe-68 is modified (phenylalanine amide). The propeptide occupies 72–121 (TAEDHEVMKRLEAVIRDLDSLDHSEEASERETRGFNQEEIANLFTKKEKR). Ile-141 carries the post-translational modification Isoleucine amide.

This sequence belongs to the bombinin family. Expressed by the skin glands.

It localises to the secreted. Maximin-y shows antimicrobial activity against bacteria and against the fungus C.albicans. It has little hemolytic activity. Its function is as follows. Maximin-Hw shows antimicrobial activity against bacteria and against the fungus C.albicans. Shows strong hemolytic activity. This Bombina maxima (Giant fire-bellied toad) protein is Maximins y/Hw.